The chain runs to 161 residues: Phosphopantetheine adenylyltransferase (161 aa).

T9 is a substrate binding site. ATP contacts are provided by residues 9–10 (TF) and H17. Residues K41, L73, and R87 each contribute to the substrate site. ATP is bound by residues 88 to 90 (GLR), E98, and 123 to 129 (YSFISST).

The protein belongs to the bacterial CoaD family. Homohexamer. Mg(2+) serves as cofactor.

Its subcellular location is the cytoplasm. It catalyses the reaction (R)-4'-phosphopantetheine + ATP + H(+) = 3'-dephospho-CoA + diphosphate. The protein operates within cofactor biosynthesis; coenzyme A biosynthesis; CoA from (R)-pantothenate: step 4/5. Its function is as follows. Reversibly transfers an adenylyl group from ATP to 4'-phosphopantetheine, yielding dephospho-CoA (dPCoA) and pyrophosphate. The polypeptide is Phosphopantetheine adenylyltransferase (Pseudomonas putida (strain ATCC 47054 / DSM 6125 / CFBP 8728 / NCIMB 11950 / KT2440)).